Consider the following 322-residue polypeptide: Cysteine protease YopT (322 aa).

Catalysis depends on residues cysteine 139, histidine 258, and aspartate 274.

This sequence belongs to the peptidase C58 family. As to quaternary structure, interacts with human ARHA.

The protein resides in the secreted. Functionally, cysteine protease, which is translocated into infected cells and plays a central role in pathogenesis by cleaving the C-terminus end of the human small GTPase RhoA/ARHA, a regulator of cytoskeleton. Once cleaved, ARHA loses its lipid modification, and is released from the cell membrane, leading to the subsequent disruption of actin cytoskeleton of the host cell. This chain is Cysteine protease YopT (yopT), found in Yersinia pseudotuberculosis serotype I (strain IP32953).